We begin with the raw amino-acid sequence, 317 residues long: L-lactate dehydrogenase 1 (317 aa).

Residues V17, D38, K43, Y69, and 83-84 each bind NAD(+); that span reads GA. Residues Q86 and R92 each coordinate substrate. Residues S105, 122-124, and S147 each bind NAD(+); that span reads ATN. 124–127 contacts substrate; the sequence is NPVD. 152–155 provides a ligand contact to substrate; that stretch reads DSAR. The active-site Proton acceptor is the H179. Residue Y223 is modified to Phosphotyrosine. T232 is a binding site for substrate.

This sequence belongs to the LDH/MDH superfamily. LDH family. Homotetramer.

It localises to the cytoplasm. The catalysed reaction is (S)-lactate + NAD(+) = pyruvate + NADH + H(+). Its pathway is fermentation; pyruvate fermentation to lactate; (S)-lactate from pyruvate: step 1/1. In terms of biological role, catalyzes the conversion of lactate to pyruvate (Potential). Appears to be the primary factor that allows S.aureus growth during nitrosative stress in both aerobically and anaerobically cultured cells. The sequence is that of L-lactate dehydrogenase 1 from Staphylococcus aureus (strain bovine RF122 / ET3-1).